The primary structure comprises 193 residues: dTTP/UTP pyrophosphatase (193 aa).

D70 (proton acceptor) is an active-site residue.

This sequence belongs to the Maf family. YhdE subfamily. The cofactor is a divalent metal cation.

The protein localises to the cytoplasm. It catalyses the reaction dTTP + H2O = dTMP + diphosphate + H(+). The catalysed reaction is UTP + H2O = UMP + diphosphate + H(+). Nucleoside triphosphate pyrophosphatase that hydrolyzes dTTP and UTP. May have a dual role in cell division arrest and in preventing the incorporation of modified nucleotides into cellular nucleic acids. The sequence is that of dTTP/UTP pyrophosphatase from Alcanivorax borkumensis (strain ATCC 700651 / DSM 11573 / NCIMB 13689 / SK2).